A 298-amino-acid chain; its full sequence is Phosphatidylserine decarboxylase proenzyme (298 aa).

Active-site charge relay system; for autoendoproteolytic cleavage activity residues include Asp113, His169, and Ser256. Ser256 (schiff-base intermediate with substrate; via pyruvic acid; for decarboxylase activity) is an active-site residue. Ser256 carries the post-translational modification Pyruvic acid (Ser); by autocatalysis.

It belongs to the phosphatidylserine decarboxylase family. PSD-B subfamily. Prokaryotic type II sub-subfamily. As to quaternary structure, heterodimer of a large membrane-associated beta subunit and a small pyruvoyl-containing alpha subunit. The cofactor is pyruvate. Post-translationally, is synthesized initially as an inactive proenzyme. Formation of the active enzyme involves a self-maturation process in which the active site pyruvoyl group is generated from an internal serine residue via an autocatalytic post-translational modification. Two non-identical subunits are generated from the proenzyme in this reaction, and the pyruvate is formed at the N-terminus of the alpha chain, which is derived from the carboxyl end of the proenzyme. The autoendoproteolytic cleavage occurs by a canonical serine protease mechanism, in which the side chain hydroxyl group of the serine supplies its oxygen atom to form the C-terminus of the beta chain, while the remainder of the serine residue undergoes an oxidative deamination to produce ammonia and the pyruvoyl prosthetic group on the alpha chain. During this reaction, the Ser that is part of the protease active site of the proenzyme becomes the pyruvoyl prosthetic group, which constitutes an essential element of the active site of the mature decarboxylase.

Its subcellular location is the cell membrane. The enzyme catalyses a 1,2-diacyl-sn-glycero-3-phospho-L-serine + H(+) = a 1,2-diacyl-sn-glycero-3-phosphoethanolamine + CO2. Its pathway is phospholipid metabolism; phosphatidylethanolamine biosynthesis; phosphatidylethanolamine from CDP-diacylglycerol: step 2/2. Its function is as follows. Catalyzes the formation of phosphatidylethanolamine (PtdEtn) from phosphatidylserine (PtdSer). This Desulfitobacterium hafniense (strain Y51) protein is Phosphatidylserine decarboxylase proenzyme.